Reading from the N-terminus, the 333-residue chain is Viral cathepsin (333 aa).

The first 20 residues, 1 to 20 (MTKLLNFVILASVLTVTAHA), serve as a signal peptide directing secretion. The propeptide at 21-124 (LTYDLNNSDE…VIKDEPQALL (104 aa)) is activation peptide. Disulfide bonds link Cys145-Cys186, Cys179-Cys219, and Cys272-Cys321. Residue Cys148 is part of the active site. N-linked (GlcNAc...) asparagine; by host glycosylation occurs at Asn170. Active-site residues include His280 and Asn300.

This sequence belongs to the peptidase C1 family. In terms of processing, synthesized as an inactive proenzyme and activated by proteolytic removal of the inhibitory propeptide.

The catalysed reaction is Endopeptidase of broad specificity, hydrolyzing substrates of both cathepsin L and cathepsin B.. Its function is as follows. Cysteine protease that plays an essential role in host liquefaction to facilitate horizontal transmission of the virus. May participate in the degradation of foreign protein expressed by the baculovirus system. In Cydia pomonella granulosis virus (isolate Mexico/1963) (CpGV), this protein is Viral cathepsin (VCATH).